The sequence spans 274 residues: Type II restriction enzyme XamI (274 aa).

It carries out the reaction Endonucleolytic cleavage of DNA to give specific double-stranded fragments with terminal 5'-phosphates.. A P subtype restriction enzyme that recognizes the double-stranded sequence 5'-GTCGAC-3' and cleaves after G-1. In Xanthomonas campestris pv. amaranthicola, this protein is Type II restriction enzyme XamI (xamIR).